Consider the following 406-residue polypeptide: Nicotinate phosphoribosyltransferase (406 aa).

H225 is subject to Phosphohistidine; by autocatalysis.

Belongs to the NAPRTase family. Post-translationally, transiently phosphorylated on a His residue during the reaction cycle. Phosphorylation strongly increases the affinity for substrates and increases the rate of nicotinate D-ribonucleotide production. Dephosphorylation regenerates the low-affinity form of the enzyme, leading to product release.

It carries out the reaction nicotinate + 5-phospho-alpha-D-ribose 1-diphosphate + ATP + H2O = nicotinate beta-D-ribonucleotide + ADP + phosphate + diphosphate. It participates in cofactor biosynthesis; NAD(+) biosynthesis; nicotinate D-ribonucleotide from nicotinate: step 1/1. In terms of biological role, catalyzes the synthesis of beta-nicotinate D-ribonucleotide from nicotinate and 5-phospho-D-ribose 1-phosphate at the expense of ATP. This Psychromonas ingrahamii (strain DSM 17664 / CCUG 51855 / 37) protein is Nicotinate phosphoribosyltransferase.